Here is a 321-residue protein sequence, read N- to C-terminus: ATP-dependent 6-phosphofructokinase (321 aa).

Glycine 12 provides a ligand contact to ATP. ADP-binding positions include 22 to 26 (RGVVR) and 55 to 60 (RYSVSD). ATP is bound by residues 73-74 (RF) and 103-106 (GDGS). Mg(2+) is bound at residue aspartate 104. 127-129 (TID) contributes to the substrate binding site. The Proton acceptor role is filled by aspartate 129. Residue arginine 156 coordinates ADP. Residues arginine 164 and 171–173 (MGR) contribute to the substrate site. ADP-binding positions include 187–189 (GCE) and 215–217 (KRH). Residues glutamate 224, arginine 245, and 251 to 254 (HVQR) each bind substrate.

The protein belongs to the phosphofructokinase type A (PFKA) family. ATP-dependent PFK group I subfamily. Prokaryotic clade 'B1' sub-subfamily. Homotetramer. Requires Mg(2+) as cofactor.

It localises to the cytoplasm. It carries out the reaction beta-D-fructose 6-phosphate + ATP = beta-D-fructose 1,6-bisphosphate + ADP + H(+). Its pathway is carbohydrate degradation; glycolysis; D-glyceraldehyde 3-phosphate and glycerone phosphate from D-glucose: step 3/4. Allosterically activated by ADP and other diphosphonucleosides, and allosterically inhibited by phosphoenolpyruvate. In terms of biological role, catalyzes the phosphorylation of D-fructose 6-phosphate to fructose 1,6-bisphosphate by ATP, the first committing step of glycolysis. The sequence is that of ATP-dependent 6-phosphofructokinase from Mannheimia succiniciproducens (strain KCTC 0769BP / MBEL55E).